The chain runs to 271 residues: Regulatory protein RecX (271 aa).

Belongs to the RecX family.

Its subcellular location is the cytoplasm. In terms of biological role, modulates RecA activity. This Lactobacillus delbrueckii subsp. bulgaricus (strain ATCC BAA-365 / Lb-18) protein is Regulatory protein RecX.